The following is a 631-amino-acid chain: DNA mismatch repair protein MutL (631 aa).

The disordered stretch occupies residues 389 to 423; it reads GEREASRQAGGQRVQETQMSSYGSGQSGGRGRSYA.

The protein belongs to the DNA mismatch repair MutL/HexB family.

In terms of biological role, this protein is involved in the repair of mismatches in DNA. It is required for dam-dependent methyl-directed DNA mismatch repair. May act as a 'molecular matchmaker', a protein that promotes the formation of a stable complex between two or more DNA-binding proteins in an ATP-dependent manner without itself being part of a final effector complex. The sequence is that of DNA mismatch repair protein MutL from Shewanella loihica (strain ATCC BAA-1088 / PV-4).